The chain runs to 45 residues: Large ribosomal subunit protein bL34 (45 aa).

The protein belongs to the bacterial ribosomal protein bL34 family.

The protein is Large ribosomal subunit protein bL34 of Opitutus terrae (strain DSM 11246 / JCM 15787 / PB90-1).